Reading from the N-terminus, the 129-residue chain is Large ribosomal subunit protein uL22 (129 aa).

It belongs to the universal ribosomal protein uL22 family. As to quaternary structure, part of the 50S ribosomal subunit.

Functionally, this protein binds specifically to 23S rRNA; its binding is stimulated by other ribosomal proteins, e.g. L4, L17, and L20. It is important during the early stages of 50S assembly. It makes multiple contacts with different domains of the 23S rRNA in the assembled 50S subunit and ribosome. Its function is as follows. The globular domain of the protein is located near the polypeptide exit tunnel on the outside of the subunit, while an extended beta-hairpin is found that lines the wall of the exit tunnel in the center of the 70S ribosome. The polypeptide is Large ribosomal subunit protein uL22 (Aster yellows witches'-broom phytoplasma (strain AYWB)).